A 119-amino-acid polypeptide reads, in one-letter code: Hydrogenase maturation factor HypA (119 aa).

Residue His-2 coordinates Ni(2+). Cys-73, Cys-76, Cys-89, and Cys-92 together coordinate Zn(2+).

This sequence belongs to the HypA/HybF family.

Functionally, involved in the maturation of [NiFe] hydrogenases. Required for nickel insertion into the metal center of the hydrogenase. This Dehalococcoides mccartyi (strain ATCC BAA-2100 / JCM 16839 / KCTC 5957 / BAV1) protein is Hydrogenase maturation factor HypA.